The chain runs to 1448 residues: Protein clueless (1448 aa).

Disordered stretches follow at residues 1-96 (MALE…HAEK), 110-129 (NANV…ADGD), and 265-286 (RTRP…VSDP). 2 stretches are compositionally biased toward low complexity: residues 9 to 26 (NSNA…TKAS) and 41 to 66 (NLNP…ADGP). The span at 68–77 (AKKKGKKNRN) shows a compositional bias: basic residues. A compositionally biased stretch (polar residues) spans 78 to 88 (KSPTEPTTEAV). Residue Ser-270 is modified to Phosphoserine. One can recognise a Clu domain in the interval 424–666 (RAEDAFSSKL…RTFPPDVNFL (243 aa)). 3 disordered regions span residues 726–773 (SEKS…SGEA), 958–1010 (AVSS…SASD), and 1414–1448 (GEAE…ATSS). Residues 748-769 (GAEKPDDKEKKNEEEEKKERST) are compositionally biased toward basic and acidic residues. The segment covering 966-981 (KKRGNGGKHNKHKSSK) has biased composition (basic residues). Residues 986 to 1007 (QQQQQTTGNQNGSSSGSSNSSS) show a composition bias toward low complexity. A compositionally biased stretch (basic and acidic residues) spans 1419-1429 (AVSKDIKEQPE).

It belongs to the CLU family.

It is found in the cytoplasm. Functionally, mRNA-binding protein involved in proper cytoplasmic distribution of mitochondria. The protein is Protein clueless of Drosophila melanogaster (Fruit fly).